Here is a 445-residue protein sequence, read N- to C-terminus: 3-phosphoshikimate 1-carboxyvinyltransferase (445 aa).

Residues 1 to 20 (MSSTHPGRTIRSGATQNLSG) show a composition bias toward polar residues. Residues 1–24 (MSSTHPGRTIRSGATQNLSGTIRP) are disordered. Residues Lys-28, Ser-29, and Arg-33 each contribute to the 3-phosphoshikimate site. Lys-28 serves as a coordination point for phosphoenolpyruvate. Phosphoenolpyruvate is bound by residues Gly-101 and Arg-129. 3-phosphoshikimate contacts are provided by Ser-174, Gln-176, Asp-322, and Lys-349. Gln-176 lines the phosphoenolpyruvate pocket. The Proton acceptor role is filled by Asp-322. Phosphoenolpyruvate-binding residues include Arg-353 and Arg-397.

The protein belongs to the EPSP synthase family. As to quaternary structure, monomer.

Its subcellular location is the cytoplasm. The enzyme catalyses 3-phosphoshikimate + phosphoenolpyruvate = 5-O-(1-carboxyvinyl)-3-phosphoshikimate + phosphate. Its pathway is metabolic intermediate biosynthesis; chorismate biosynthesis; chorismate from D-erythrose 4-phosphate and phosphoenolpyruvate: step 6/7. Its function is as follows. Catalyzes the transfer of the enolpyruvyl moiety of phosphoenolpyruvate (PEP) to the 5-hydroxyl of shikimate-3-phosphate (S3P) to produce enolpyruvyl shikimate-3-phosphate and inorganic phosphate. The polypeptide is 3-phosphoshikimate 1-carboxyvinyltransferase (Magnetococcus marinus (strain ATCC BAA-1437 / JCM 17883 / MC-1)).